We begin with the raw amino-acid sequence, 279 residues long: 4-deoxy-L-threo-5-hexosulose-uronate ketol-isomerase (279 aa).

The Zn(2+) site is built by His197, His199, Glu204, and His246.

This sequence belongs to the KduI family. Zn(2+) is required as a cofactor.

The enzyme catalyses 5-dehydro-4-deoxy-D-glucuronate = 3-deoxy-D-glycero-2,5-hexodiulosonate. It participates in glycan metabolism; pectin degradation; 2-dehydro-3-deoxy-D-gluconate from pectin: step 4/5. Its function is as follows. Catalyzes the isomerization of 5-dehydro-4-deoxy-D-glucuronate to 3-deoxy-D-glycero-2,5-hexodiulosonate. This chain is 4-deoxy-L-threo-5-hexosulose-uronate ketol-isomerase, found in Kineococcus radiotolerans (strain ATCC BAA-149 / DSM 14245 / SRS30216).